We begin with the raw amino-acid sequence, 370 residues long: DNA replication and repair protein RecF (370 aa).

Position 30-37 (30-37) interacts with ATP; it reads GENAQGKT.

It belongs to the RecF family.

Its subcellular location is the cytoplasm. In terms of biological role, the RecF protein is involved in DNA metabolism; it is required for DNA replication and normal SOS inducibility. RecF binds preferentially to single-stranded, linear DNA. It also seems to bind ATP. The polypeptide is DNA replication and repair protein RecF (Staphylococcus carnosus (strain TM300)).